Consider the following 417-residue polypeptide: Calreticulin (417 aa).

An N-terminal signal peptide occupies residues 1 to 17 (MLLSVPLLLGLLGLAAA). Residues 18–197 (EPAVYFKEQF…NSQVESGSLE (180 aa)) are N-domain. Glutamine 26 serves as a coordination point for Ca(2+). Lysine 48 is modified (N6-acetyllysine). Ca(2+)-binding residues include lysine 62 and lysine 64. Lysine 64 is modified (N6-(2-hydroxyisobutyryl)lysine). Cysteine 105 and cysteine 137 form a disulfide bridge. An alpha-D-glucoside is bound by residues tyrosine 109, lysine 111, tyrosine 128, and aspartate 135. Position 159 is an N6-acetyllysine (lysine 159). The 1-1 repeat unit spans residues 191-202 (VESGSLEDDWDF). Residues 191-255 (VESGSLEDDW…DAKKPEDWDE (65 aa)) are 4 X approximate repeats. Residues 193-277 (SGSLEDDWDF…NPEYKGEWKP (85 aa)) form a disordered region. The segment at 198–308 (DDWDFLPPKK…YSPDANIYAY (111 aa)) is P-domain. Residues 207–251 (KIKDPDAAKPEDWDERAKIDDPTDSKPEDWDKPEHIPDPDAKKPE) show a composition bias toward basic and acidic residues. Lysine 209 carries the post-translational modification N6-acetyllysine. 6 consecutive repeat copies span residues 210–221 (DPDAAKPEDWDE), 227–238 (DPTDSKPEDWDK), 244–255 (DPDAKKPEDWDE), 259–269 (GEWEPPVIQNP), 273–283 (GEWKPRQIDNP), and 287–297 (GTWIHPEIDNP). The interaction with PPIB stretch occupies residues 237 to 270 (DKPEHIPDPDAKKPEDWDEEMDGEWEPPVIQNPE). Acidic residues predominate over residues 252–261 (DWDEEMDGEW). The 3 X approximate repeats stretch occupies residues 259–297 (GEWEPPVIQNPEYKGEWKPRQIDNPDYKGTWIHPEIDNP). The C-domain stretch occupies residues 309 to 417 (DSFAVLGLDL…TTPGQTKDEL (109 aa)). Aspartate 317 serves as a coordination point for an alpha-D-glucoside. Aspartate 328 serves as a coordination point for Ca(2+). The segment at 350-417 (TKASEKQMKD…TTPGQTKDEL (68 aa)) is disordered. Basic and acidic residues predominate over residues 352–379 (ASEKQMKDKQDEEQRLKEEEEDKKRKEE). Residues 380–408 (EEAEDKEDEDDRDEDEEDEDEKEEDEEDT) show a composition bias toward acidic residues. A Prevents secretion from ER motif is present at residues 414–417 (KDEL).

The protein belongs to the calreticulin family. Monomer. Component of an EIF2 complex at least composed of CELF1/CUGBP1, CALR, CALR3, EIF2S1, EIF2S2, HSP90B1 and HSPA5. Interacts with PDIA3/ERp57 and SPACA9. Interacts with TRIM21. Interacts with NR3C1. Interacts with PPIB. Interacts (via P-domain) with PDIA5. Interacts with GABARAP. Interacts with CLCC1.

It localises to the endoplasmic reticulum lumen. Its subcellular location is the cytoplasm. The protein resides in the cytosol. The protein localises to the cytolytic granule. It is found in the secreted. It localises to the extracellular space. Its subcellular location is the extracellular matrix. The protein resides in the cell surface. The protein localises to the sarcoplasmic reticulum lumen. It is found in the cytoplasmic vesicle. It localises to the secretory vesicle. Its subcellular location is the cortical granule. In terms of biological role, calcium-binding chaperone that promotes folding, oligomeric assembly and quality control in the endoplasmic reticulum (ER) via the calreticulin/calnexin cycle. This lectin interacts transiently with almost all of the monoglucosylated glycoproteins that are synthesized in the ER. Interacts with the DNA-binding domain of NR3C1 and mediates its nuclear export. Involved in maternal gene expression regulation. May participate in oocyte maturation via the regulation of calcium homeostasis. Present in the cortical granules of non-activated oocytes, is exocytosed during the cortical reaction in response to oocyte activation and might participate in the block to polyspermy. This chain is Calreticulin (CALR), found in Cricetulus griseus (Chinese hamster).